The primary structure comprises 160 residues: Ureidoglycolate lyase (160 aa).

Belongs to the ureidoglycolate lyase family. Homodimer. Ni(2+) serves as cofactor.

The enzyme catalyses (S)-ureidoglycolate = urea + glyoxylate. It participates in nitrogen metabolism; (S)-allantoin degradation. Its function is as follows. Catalyzes the catabolism of the allantoin degradation intermediate (S)-ureidoglycolate, generating urea and glyoxylate. Involved in the anaerobic utilization of allantoin as sole nitrogen source. Reinforces the induction of genes involved in the degradation of allantoin and glyoxylate by producing glyoxylate. This is Ureidoglycolate lyase from Escherichia coli O139:H28 (strain E24377A / ETEC).